A 331-amino-acid chain; its full sequence is DNA-directed RNA polymerase subunit alpha (331 aa).

Residues 1 to 225 form an alpha N-terminal domain (alpha-NTD) region; the sequence is MLDIAMPKLE…QYSSIIADFN (225 aa). Positions 243-331 are alpha C-terminal domain (alpha-CTD); the sequence is PSEIYDMPIE…AARLNDGSAE (89 aa).

This sequence belongs to the RNA polymerase alpha chain family. Homodimer. The RNAP catalytic core consists of 2 alpha, 1 beta, 1 beta' and 1 omega subunit. When a sigma factor is associated with the core the holoenzyme is formed, which can initiate transcription.

It catalyses the reaction RNA(n) + a ribonucleoside 5'-triphosphate = RNA(n+1) + diphosphate. Functionally, DNA-dependent RNA polymerase catalyzes the transcription of DNA into RNA using the four ribonucleoside triphosphates as substrates. The protein is DNA-directed RNA polymerase subunit alpha of Herpetosiphon aurantiacus (strain ATCC 23779 / DSM 785 / 114-95).